The following is a 469-amino-acid chain: ATP synthase subunit beta (469 aa).

Position 155 to 162 (155 to 162 (GGAGVGKT)) interacts with ATP.

Belongs to the ATPase alpha/beta chains family. In terms of assembly, F-type ATPases have 2 components, CF(1) - the catalytic core - and CF(0) - the membrane proton channel. CF(1) has five subunits: alpha(3), beta(3), gamma(1), delta(1), epsilon(1). CF(0) has three main subunits: a(1), b(2) and c(9-12). The alpha and beta chains form an alternating ring which encloses part of the gamma chain. CF(1) is attached to CF(0) by a central stalk formed by the gamma and epsilon chains, while a peripheral stalk is formed by the delta and b chains.

The protein localises to the cell inner membrane. The catalysed reaction is ATP + H2O + 4 H(+)(in) = ADP + phosphate + 5 H(+)(out). Produces ATP from ADP in the presence of a proton gradient across the membrane. The catalytic sites are hosted primarily by the beta subunits. This is ATP synthase subunit beta from Syntrophobacter fumaroxidans (strain DSM 10017 / MPOB).